A 913-amino-acid chain; its full sequence is ER degradation-enhancing alpha-mannosidase-like protein 3 (913 aa).

Positions 1-15 are cleaved as a signal peptide; that stretch reads MGCPAVEARRWGDMW. An N-linked (GlcNAc...) asparagine glycan is attached at asparagine 104. The active-site Proton donor is the glutamate 132. Asparagine 181 is a glycosylation site (N-linked (GlcNAc...) asparagine). The active site involves aspartate 279. Glutamate 373 serves as the catalytic Proton donor. Residue glutamate 391 is part of the active site. Threonine 477 contributes to the Ca(2+) binding site. N-linked (GlcNAc...) asparagine glycosylation occurs at asparagine 497. Residues 660–766 enclose the PA domain; that stretch reads LSKHLAGAQG…KEGNIILDAI (107 aa). A glycan (N-linked (GlcNAc...) asparagine) is linked at asparagine 797. The segment at 823–895 is disordered; the sequence is EESPVSQPEV…NKVQPMESIL (73 aa). The segment covering 826-839 has biased composition (low complexity); sequence PVSQPEVPSSDSPS. Residues 843 to 866 are compositionally biased toward basic and acidic residues; that stretch reads RTSERDITPESQEHKTEETEHSPK. Residues 910-913 carry the Prevents secretion from ER motif; the sequence is KDEL.

Belongs to the glycosyl hydrolase 47 family. The cofactor is Ca(2+).

Its subcellular location is the endoplasmic reticulum lumen. The enzyme catalyses N(4)-(alpha-D-Man-(1-&gt;2)-alpha-D-Man-(1-&gt;2)-alpha-D-Man-(1-&gt;3)-[alpha-D-Man-(1-&gt;2)-alpha-D-Man-(1-&gt;3)-[alpha-D-Man-(1-&gt;2)-alpha-D-Man-(1-&gt;6)]-alpha-D-Man-(1-&gt;6)]-beta-D-Man-(1-&gt;4)-beta-D-GlcNAc-(1-&gt;4)-beta-D-GlcNAc)-L-asparaginyl-[protein] (N-glucan mannose isomer 9A1,2,3B1,2,3) + 4 H2O = N(4)-(alpha-D-Man-(1-&gt;3)-[alpha-D-Man-(1-&gt;3)-[alpha-D-Man-(1-&gt;6)]-alpha-D-Man-(1-&gt;6)]-beta-D-Man-(1-&gt;4)-beta-D-GlcNAc-(1-&gt;4)-beta-D-GlcNAc)-L-asparaginyl-[protein] (N-glucan mannose isomer 5A1,2) + 4 beta-D-mannose. The catalysed reaction is N(4)-(alpha-D-Man-(1-&gt;2)-alpha-D-Man-(1-&gt;2)-alpha-D-Man-(1-&gt;3)-[alpha-D-Man-(1-&gt;3)-[alpha-D-Man-(1-&gt;2)-alpha-D-Man-(1-&gt;6)]-alpha-D-Man-(1-&gt;6)]-beta-D-Man-(1-&gt;4)-beta-D-GlcNAc-(1-&gt;4)-beta-D-GlcNAc)-L-asparaginyl-[protein] (N-glucan mannose isomer 8A1,2,3B1,3) + 3 H2O = N(4)-(alpha-D-Man-(1-&gt;3)-[alpha-D-Man-(1-&gt;3)-[alpha-D-Man-(1-&gt;6)]-alpha-D-Man-(1-&gt;6)]-beta-D-Man-(1-&gt;4)-beta-D-GlcNAc-(1-&gt;4)-beta-D-GlcNAc)-L-asparaginyl-[protein] (N-glucan mannose isomer 5A1,2) + 3 beta-D-mannose. It participates in protein modification; protein glycosylation. Its function is as follows. May be involved in endoplasmic reticulum-associated degradation (ERAD). In Xenopus laevis (African clawed frog), this protein is ER degradation-enhancing alpha-mannosidase-like protein 3 (edem3).